The chain runs to 104 residues: Alpha-amylase inhibitor HOE-467A (104 aa).

A signal peptide spans 1-30 (MRVRALRLAALVGAGAALALSPLAAGPASA). Disulfide bonds link cysteine 41/cysteine 57 and cysteine 75/cysteine 103.

In terms of biological role, inhibits mammalian alpha-amylases specifically but has no action on plant and microbial alpha-amylases. Forms a tight stoichiometric 1:1 complex with alpha-amylase. The protein is Alpha-amylase inhibitor HOE-467A of Streptomyces tendae.